A 258-amino-acid chain; its full sequence is Acetylglutamate kinase (258 aa).

Residues glycine 44–glycine 45, arginine 66, and asparagine 158 each bind substrate. ATP is bound by residues aspartate 181–leucine 186 and isoleucine 209–threonine 211.

The protein belongs to the acetylglutamate kinase family. ArgB subfamily. In terms of assembly, homodimer.

It is found in the cytoplasm. The catalysed reaction is N-acetyl-L-glutamate + ATP = N-acetyl-L-glutamyl 5-phosphate + ADP. It functions in the pathway amino-acid biosynthesis; L-arginine biosynthesis; N(2)-acetyl-L-ornithine from L-glutamate: step 2/4. In terms of biological role, catalyzes the ATP-dependent phosphorylation of N-acetyl-L-glutamate. This chain is Acetylglutamate kinase, found in Escherichia coli O157:H7.